Consider the following 385-residue polypeptide: Arginine biosynthesis bifunctional protein ArgJ (385 aa).

Residues threonine 142, lysine 168, threonine 179, glutamate 259, asparagine 380, and threonine 385 each coordinate substrate. Threonine 179 acts as the Nucleophile in catalysis.

It belongs to the ArgJ family. Heterotetramer of two alpha and two beta chains.

It is found in the cytoplasm. The catalysed reaction is N(2)-acetyl-L-ornithine + L-glutamate = N-acetyl-L-glutamate + L-ornithine. The enzyme catalyses L-glutamate + acetyl-CoA = N-acetyl-L-glutamate + CoA + H(+). The protein operates within amino-acid biosynthesis; L-arginine biosynthesis; L-ornithine and N-acetyl-L-glutamate from L-glutamate and N(2)-acetyl-L-ornithine (cyclic): step 1/1. It functions in the pathway amino-acid biosynthesis; L-arginine biosynthesis; N(2)-acetyl-L-ornithine from L-glutamate: step 1/4. Its function is as follows. Catalyzes two activities which are involved in the cyclic version of arginine biosynthesis: the synthesis of N-acetylglutamate from glutamate and acetyl-CoA as the acetyl donor, and of ornithine by transacetylation between N(2)-acetylornithine and glutamate. The chain is Arginine biosynthesis bifunctional protein ArgJ from Leptospira interrogans serogroup Icterohaemorrhagiae serovar Lai (strain 56601).